Consider the following 181-residue polypeptide: ATP-dependent protease subunit HslV (181 aa).

Threonine 7 is an active-site residue. The Na(+) site is built by alanine 165, cysteine 168, and threonine 171.

It belongs to the peptidase T1B family. HslV subfamily. In terms of assembly, a double ring-shaped homohexamer of HslV is capped on each side by a ring-shaped HslU homohexamer. The assembly of the HslU/HslV complex is dependent on binding of ATP.

Its subcellular location is the cytoplasm. The catalysed reaction is ATP-dependent cleavage of peptide bonds with broad specificity.. Its activity is regulated as follows. Allosterically activated by HslU binding. Functionally, protease subunit of a proteasome-like degradation complex believed to be a general protein degrading machinery. In Lysinibacillus sphaericus (strain C3-41), this protein is ATP-dependent protease subunit HslV.